The following is a 282-amino-acid chain: Large ribosomal subunit protein uL2 (282 aa).

A disordered region spans residues 223-282; that stretch reads TVRGSVMNPNDHPHGGGEGRAPIGRKSPVTPWGKKALGVKTRNTKKTSEKLIVRKRSNKK.

It belongs to the universal ribosomal protein uL2 family. In terms of assembly, part of the 50S ribosomal subunit. Forms a bridge to the 30S subunit in the 70S ribosome.

Functionally, one of the primary rRNA binding proteins. Required for association of the 30S and 50S subunits to form the 70S ribosome, for tRNA binding and peptide bond formation. It has been suggested to have peptidyltransferase activity; this is somewhat controversial. Makes several contacts with the 16S rRNA in the 70S ribosome. This Mycoplasma mycoides subsp. mycoides SC (strain CCUG 32753 / NCTC 10114 / PG1) protein is Large ribosomal subunit protein uL2.